Consider the following 354-residue polypeptide: Putative F-box/kelch-repeat protein At5g03000 (354 aa).

Residues 37–86 form the F-box domain; sequence PTVFSSLPDELILNCLARVSRFYRPSLSLVNKEFQSLIASPDLEATRSRI. Kelch repeat units follow at residues 143-189 and 190-236; these read EIYI…VIDG and KIYV…FPGK.

This Arabidopsis thaliana (Mouse-ear cress) protein is Putative F-box/kelch-repeat protein At5g03000.